The chain runs to 284 residues: MQSEQQAIGASGCEDAQQPVRQQRARGRGRIVTKAVEGRSRLDELFQEGCAKIRLPDTFSNEAEAILINSSGGLTGGDDIEWQATAGAGTSLVVTTQACEKVYKASSGTATVTARISAGPGAKLHWLPQETILFDRASLNRRLEADLDQSSEFIAVEAVLLGRQAMGEAMTHGLFRDRWRIRHGGRLVHAEELLLEGEVAELTAKPAVLAGQVAFATLLYIGPLSEALLPKIRAIAGESGGASEWQGKLVVRVSAADGFSLRKLLFPIISLLRNGAPVPKVWNL.

The interval 1–28 (MQSEQQAIGASGCEDAQQPVRQQRARGR) is disordered.

Belongs to the UreD family. In terms of assembly, ureD, UreF and UreG form a complex that acts as a GTP-hydrolysis-dependent molecular chaperone, activating the urease apoprotein by helping to assemble the nickel containing metallocenter of UreC. The UreE protein probably delivers the nickel.

It is found in the cytoplasm. In terms of biological role, required for maturation of urease via the functional incorporation of the urease nickel metallocenter. In Agrobacterium fabrum (strain C58 / ATCC 33970) (Agrobacterium tumefaciens (strain C58)), this protein is Urease accessory protein UreD.